The chain runs to 79 residues: MDQTPIADMKFETALAELEDIVASMEGGKLELEASIAAYKRGMELMKHCQNQLADAEAQIRVLENGQFKDVDRSTLEAQ.

This sequence belongs to the XseB family. Heterooligomer composed of large and small subunits.

It is found in the cytoplasm. It carries out the reaction Exonucleolytic cleavage in either 5'- to 3'- or 3'- to 5'-direction to yield nucleoside 5'-phosphates.. Its function is as follows. Bidirectionally degrades single-stranded DNA into large acid-insoluble oligonucleotides, which are then degraded further into small acid-soluble oligonucleotides. The chain is Exodeoxyribonuclease 7 small subunit from Dechloromonas aromatica (strain RCB).